Reading from the N-terminus, the 662-residue chain is Acetyl-coenzyme A synthetase (662 aa).

Residues 197-200 (RKGK) and threonine 317 each bind CoA. ATP contacts are provided by residues 393-395 (GEP), 417-422 (DTWWQT), aspartate 510, and arginine 525. Serine 533 lines the CoA pocket. An ATP-binding site is contributed by arginine 536. Residues histidine 549 and valine 552 each contribute to the Mg(2+) site. Position 623 is an N6-acetyllysine (lysine 623).

This sequence belongs to the ATP-dependent AMP-binding enzyme family. Mg(2+) is required as a cofactor. In terms of processing, acetylated. Deacetylation by the SIR2-homolog deacetylase activates the enzyme.

The enzyme catalyses acetate + ATP + CoA = acetyl-CoA + AMP + diphosphate. In terms of biological role, catalyzes the conversion of acetate into acetyl-CoA (AcCoA), an essential intermediate at the junction of anabolic and catabolic pathways. AcsA undergoes a two-step reaction. In the first half reaction, AcsA combines acetate with ATP to form acetyl-adenylate (AcAMP) intermediate. In the second half reaction, it can then transfer the acetyl group from AcAMP to the sulfhydryl group of CoA, forming the product AcCoA. The sequence is that of Acetyl-coenzyme A synthetase from Helicobacter pylori (strain P12).